A 2002-amino-acid chain; its full sequence is MEQDRTNHVEGNRLSPFLIPSPPICQTEPLATKLQNGSPLPERAHPEVNGDTKWHSFKSYYGIPCMKGSQNSRVSPDFTQESRGYSKCLQNGGIKRTVSEPSLSGLLQIKKLKQDQKANGERRNFGVSQERNPGESSQPNVSDLSDKKESVSSVAQENAVKDFTSFSTHNCSGPENPELQILNEQEGKSANYHDKNIVLLKNKAVLMPNGATVSASSVEHTHGELLEKTLSQYYPDCVSIAVQKTTSHINAINSQATNELSCEITHPSHTSGQINSAQTSNSELPPKPAAVVSEACDADDADNASKLAAMLNTCSFQKPEQLQQQKSVFEICPSPAENNIQGTTKLASGEEFCSGSSSNLQAPGGSSERYLKQNEMNGAYFKQSSVFTKDSFSATTTPPPPSQLLLSPPPPLPQVPQLPSEGKSTLNGGVLEEHHHYPNQSNTTLLREVKIEGKPEAPPSQSPNPSTHVCSPSPMLSERPQNNCVNRNDIQTAGTMTVPLCSEKTRPMSEHLKHNPPIFGSSGELQDNCQQLMRNKEQEILKGRDKEQTRDLVPPTQHYLKPGWIELKAPRFHQAESHLKRNEASLPSILQYQPNLSNQMTSKQYTGNSNMPGGLPRQAYTQKTTQLEHKSQMYQVEMNQGQSQGTVDQHLQFQKPSHQVHFSKTDHLPKAHVQSLCGTRFHFQQRADSQTEKLMSPVLKQHLNQQASETEPFSNSHLLQHKPHKQAAQTQPSQSSHLPQNQQQQQKLQIKNKEEILQTFPHPQSNNDQQREGSFFGQTKVEECFHGENQYSKSSEFETHNVQMGLEEVQNINRRNSPYSQTMKSSACKIQVSCSNNTHLVSENKEQTTHPELFAGNKTQNLHHMQYFPNNVIPKQDLLHRCFQEQEQKSQQASVLQGYKNRNQDMSGQQAAQLAQQRYLIHNHANVFPVPDQGGSHTQTPPQKDTQKHAALRWHLLQKQEQQQTQQPQTESCHSQMHRPIKVEPGCKPHACMHTAPPENKTWKKVTKQENPPASCDNVQQKSIIETMEQHLKQFHAKSLFDHKALTLKSQKQVKVEMSGPVTVLTRQTTAAELDSHTPALEQQTTSSEKTPTKRTAASVLNNFIESPSKLLDTPIKNLLDTPVKTQYDFPSCRCVEQIIEKDEGPFYTHLGAGPNVAAIREIMEERFGQKGKAIRIERVIYTGKEGKSSQGCPIAKWVVRRSSSEEKLLCLVRERAGHTCEAAVIVILILVWEGIPLSLADKLYSELTETLRKYGTLTNRRCALNEERTCACQGLDPETCGASFSFGCSWSMYYNGCKFARSKIPRKFKLLGDDPKEEEKLESHLQNLSTLMAPTYKKLAPDAYNNQIEYEHRAPECRLGLKEGRPFSGVTACLDFCAHAHRDLHNMQNGSTLVCTLTREDNREFGGKPEDEQLHVLPLYKVSDVDEFGSVEAQEEKKRSGAIQVLSSFRRKVRMLAEPVKTCRQRKLEAKKAAAEKLSSLENSSNKNEKEKSAPSRTKQTENASQAKQLAELLRLSGPVMQQSQQPQPLQKQPPQPQQQQRPQQQQPHHPQTESVNSYSASGSTNPYMRRPNPVSPYPNSSHTSDIYGSTSPMNFYSTSSQAAGSYLNSSNPMNPYPGLLNQNTQYPSYQCNGNLSVDNCSPYLGSYSPQSQPMDLYRYPSQDPLSKLSLPPIHTLYQPRFGNSQSFTSKYLGYGNQNMQGDGFSSCTIRPNVHHVGKLPPYPTHEMDGHFMGATSRLPPNLSNPNMDYKNGEHHSPSHIIHNYSAAPGMFNSSLHALHLQNKENDMLSHTANGLSKMLPALNHDRTACVQGGLHKLSDANGQEKQPLALVQGVASGAEDNDEVWSDSEQSFLDPDIGGVAVAPTHGSILIECAKRELHATTPLKNPNRNHPTRISLVFYQHKSMNEPKHGLALWEAKMAEKAREKEEECEKYGPDYVPQKSHGKKVKREPAEPHETSEPTYLRFIKSLAERTMSVTTDSTVTTSPYAFTRVTGPYNRYI.

Over residues 1-11 (MEQDRTNHVEG) the composition is skewed to basic and acidic residues. Residues 1-22 (MEQDRTNHVEGNRLSPFLIPSP) are disordered. 3 positions are modified to phosphoserine: Ser15, Ser75, and Ser99. Residues 113–124 (KQDQKANGERRN) are compositionally biased toward basic and acidic residues. Disordered regions lie at residues 113–154 (KQDQ…VSSV), 266–287 (HPSHTSGQINSAQTSNSELPPK), 349–368 (GEEFCSGSSSNLQAPGGSSE), 390–488 (DSFS…VNRN), 703–748 (LNQQ…QQKL), 930–949 (VPDQGGSHTQTPPQKDTQKH), and 1075–1095 (DSHTPALEQQTTSSEKTPTKR). Polar residues-rich tracts occupy residues 126 to 143 (GVSQERNPGESSQPNVSD) and 267 to 283 (PSHTSGQINSAQTSNSE). Residues 397 to 416 (TPPPPSQLLLSPPPPLPQVP) show a composition bias toward pro residues. Composition is skewed to polar residues over residues 479–488 (RPQNNCVNRN) and 703–718 (LNQQASETEPFSNSHL). Residues 731-748 (QPSQSSHLPQNQQQQQKL) show a composition bias toward low complexity. Polar residues-rich tracts occupy residues 935–944 (GSHTQTPPQK) and 1081–1095 (LEQQTTSSEKTPTKR). Phosphoserine occurs at positions 1107 and 1109. Cys1133, Cys1135, Cys1193, His1219, and Cys1221 together coordinate Zn(2+). A 2-oxoglutarate-binding site is contributed by Arg1261. The Zn(2+) site is built by Cys1271, Cys1273, Cys1289, and Cys1298. Positions 1290-1303 (SWSMYYNGCKFARS) are interaction with DNA. Lys1299 is covalently cross-linked (Glycyl lysine isopeptide (Lys-Gly) (interchain with G-Cter in ubiquitin)). Cys1358 is a binding site for Zn(2+). Cys1374 lines the 2-oxoglutarate pocket. His1380 is a binding site for Zn(2+). His1382 and Asp1384 together coordinate Fe cation. Residue Asn1387 participates in substrate binding. His1416 contacts 2-oxoglutarate. Disordered regions lie at residues 1475-1507 (AAEKLSSLENSSNKNEKEKSAPSRTKQTENASQ) and 1521-1587 (VMQQ…HTSD). Over residues 1477–1487 (EKLSSLENSSN) the composition is skewed to low complexity. Residues 1496-1507 (PSRTKQTENASQ) are compositionally biased toward polar residues. 2 stretches are compositionally biased toward low complexity: residues 1523 to 1532 (QQSQQPQPLQ) and 1539 to 1551 (QQQQRPQQQQPHH). Residues 1554–1568 (TESVNSYSASGSTNP) show a composition bias toward polar residues. The residue at position 1682 (Arg1682) is an Asymmetric dimethylarginine. His1881 contributes to the Fe cation binding site. 1896–1898 (RIS) is a binding site for 2-oxoglutarate. 1902–1904 (YQH) is a binding site for substrate. His1912 contacts Zn(2+). Residues 1932–1961 (CEKYGPDYVPQKSHGKKVKREPAEPHETSE) are disordered. Positions 1951-1960 (REPAEPHETS) are enriched in basic and acidic residues.

Belongs to the TET family. Interacts with HCFC1. Interacts with OGT. Interacts with PROSER1; this interaction mediates TET2 O-GlcNAcylation and stability by promoting the interaction between OGT and TET2. Directly interacts (via C-terminus) with the DCAF1 component of the CRL4(VprBP) E3 ubiquitin-protein ligase complex. It depends on Fe(2+) as a cofactor. Requires Zn(2+) as cofactor. In terms of processing, may be glycosylated. It is unclear whether interaction with OGT leads to GlcNAcylation. According to a report, it is not GlcNAcylated by OGT. In contrast, another group reports GlcNAcylation by OGT in mouse ortholog. Post-translationally, monoubiquitinated at Lys-1299 by the DCX (DDB1-CUL4-X-box) E3 ubiquitin-protein ligase complex called CRL4(VprBP) or CUL4A-RBX1-DDB1-DCAF1/VPRBP complex; this modification promotes binding to DNA. Acetylated. Deacetylase HDAC6 acts as a valine sensor by binding to valine through its primate-specific SE14 repeat region and deacetylates TET2 following valine deprivation which promotes TET2-dependent DNA demethylation. Broadly expressed. Highly expressed in hematopoietic cells; highest expression observed in granulocytes. Expression is reduced in granulocytes from peripheral blood of patients affected by myelodysplastic syndromes.

The protein localises to the nucleus. The protein resides in the chromosome. It catalyses the reaction a 5-methyl-2'-deoxycytidine in DNA + 2-oxoglutarate + O2 = a 5-hydroxymethyl-2'-deoxycytidine in DNA + succinate + CO2. The enzyme catalyses a 5-hydroxymethyl-2'-deoxycytidine in DNA + 2-oxoglutarate + O2 = a 5-formyl-2'-deoxycytidine in DNA + succinate + CO2 + H2O. The catalysed reaction is a 5-formyl-2'-deoxycytidine in DNA + 2-oxoglutarate + O2 = a 5-carboxyl-2'-deoxycytidine in DNA + succinate + CO2 + H(+). Dioxygenase that catalyzes the conversion of the modified genomic base 5-methylcytosine (5mC) into 5-hydroxymethylcytosine (5hmC) and plays a key role in active DNA demethylation. Has a preference for 5-hydroxymethylcytosine in CpG motifs. Also mediates subsequent conversion of 5hmC into 5-formylcytosine (5fC), and conversion of 5fC to 5-carboxylcytosine (5caC). Conversion of 5mC into 5hmC, 5fC and 5caC probably constitutes the first step in cytosine demethylation. Methylation at the C5 position of cytosine bases is an epigenetic modification of the mammalian genome which plays an important role in transcriptional regulation. In addition to its role in DNA demethylation, also involved in the recruitment of the O-GlcNAc transferase OGT to CpG-rich transcription start sites of active genes, thereby promoting histone H2B GlcNAcylation by OGT. This is Methylcytosine dioxygenase TET2 (TET2) from Homo sapiens (Human).